Here is a 194-residue protein sequence, read N- to C-terminus: E3 ubiquitin-protein ligase RNF4 (194 aa).

Basic residues predominate over residues 1-12 (MSTRNPQRKRRG). The tract at residues 1-20 (MSTRNPQRKRRGGTVNSRQT) is required for ubiquitination activity. The tract at residues 1-39 (MSTRNPQRKRRGGTVNSRQTQKRTRETTSTPEVSLETEP) is disordered. Residues 6 to 65 (PQRKRRGGTVNSRQTQKRTRETTSTPEVSLETEPIELVETVGDEIVDLTCESLEPVVVDL) form a mediates interaction with TRPS1 region. The SUMO interaction motif 1; mediates the binding to polysumoylated substrates motif lies at 40–43 (IELV). The short motif at 50-53 (IVDL) is the SUMO interaction motif 2; mediates the binding to polysumoylated substrates element. An SUMO interaction motif 3; mediates the binding to polysumoylated substrates motif is present at residues 61–63 (VVV). Positions 71 to 74 (VVIV) match the SUMO interaction motif 4; mediates the binding to polysumoylated substrates motif. 2 positions are modified to phosphoserine: Ser98 and Ser99. Residues 110–130 (VYVTTHTPRSTKDDGATGPRP) form a disordered region. 8 residues coordinate Zn(2+): Cys136, Cys139, Cys158, His160, Cys163, Cys166, Cys177, and Cys180. The RING-type zinc finger occupies 136-181 (CPICMDGYSEIVQNGRLIVSTECGHVFCSQCLRDSLKNANTCPTCR).

As to quaternary structure, homodimer (via RING-type zinc finger domain). Interacts with GSC2. Interacts with AR/the androgen receptor and TBP. Interacts with TCF20. Interacts with PATZ1. Interacts with TRPS1; negatively regulates TRPS1 transcriptional repressor activity. Interacts with PML (isoform PML-1, isoform PML-2, isoform PML-3, isoform PML-4, isoform PML-5 and isoform PML-6). Interacts with PRDM1/Blimp-1. Post-translationally, sumoylated; conjugated by one or two SUMO1 moieties. In terms of processing, autoubiquitinated. As to expression, in the embryo, expressed primarily in the developing nervous system with strong expression in the dorsal root ganglia and gonads. Ubiquitously expressed in the adult.

The protein resides in the cytoplasm. The protein localises to the nucleus. It localises to the PML body. It carries out the reaction S-ubiquitinyl-[E2 ubiquitin-conjugating enzyme]-L-cysteine + [acceptor protein]-L-lysine = [E2 ubiquitin-conjugating enzyme]-L-cysteine + N(6)-ubiquitinyl-[acceptor protein]-L-lysine.. The protein operates within protein modification; protein ubiquitination. Its function is as follows. E3 ubiquitin-protein ligase which binds polysumoylated chains covalently attached to proteins and mediates 'Lys-6'-, 'Lys-11'-, 'Lys-48'- and 'Lys-63'-linked polyubiquitination of those substrates and their subsequent targeting to the proteasome for degradation. Regulates the degradation of several proteins including PML and the transcriptional activator PEA3. Involved in chromosome alignment and spindle assembly, it regulates the kinetochore CENPH-CENPI-CENPK complex by targeting polysumoylated CENPI to proteasomal degradation. Regulates the cellular responses to hypoxia and heat shock through degradation of respectively EPAS1 and PARP1. Alternatively, it may also bind DNA/nucleosomes and have a more direct role in the regulation of transcription for instance enhancing basal transcription and steroid receptor-mediated transcriptional activation. Catalyzes ubiquitination of sumoylated PARP1 in response to PARP1 trapping to chromatin, leading to PARP1 removal from chromatin by VCP/p97. This is E3 ubiquitin-protein ligase RNF4 from Mus musculus (Mouse).